Consider the following 361-residue polypeptide: uncharacterized protein (361 aa).

The signal sequence occupies residues 1-17 (MNLFIYVLLLSIWTSSC). The Extracellular portion of the chain corresponds to 18–47 (LDRNESNGSATAVTTHAEFKQTKLQELRRR). Asparagine 24 is a glycosylation site (N-linked (GlcNAc...) asparagine). The chain crosses the membrane as a helical span at residues 48–68 (LLIIVIGTLITGYMVSCTCLL). Residues 69–361 (HYSCDSEEAH…EDIYKNSRNN (293 aa)) lie on the Cytoplasmic side of the membrane. The segment covering 95 to 106 (SSKISFTDSKSP) has biased composition (polar residues). The tract at residues 95–197 (SSKISFTDSK…SQVSPSYPEK (103 aa)) is disordered. Low complexity predominate over residues 144–158 (PSSQKKPSKPSAPKK). The segment covering 169–185 (HRTRSPKKAHRQAHAHK) has biased composition (basic residues).

Its subcellular location is the membrane. This is an uncharacterized protein from Bos taurus (Bovine).